The following is a 421-amino-acid chain: PDZ and LIM domain protein 7 (421 aa).

Residues 1–85 (MEEYKVTLDG…KLGLVLSRFA (85 aa)) form the PDZ domain. The interval 115 to 193 (IARPFGSGTP…STGPAVRPPW (79 aa)) is disordered. Over residues 147–172 (YPSSQMPQGQLQNGQKSRTVSNVSGK) the composition is skewed to polar residues. 3 consecutive LIM zinc-binding domains span residues 244–302 (PVCS…ARFA), 303–362 (PNCA…MFGT), and 363–421 (KCRG…FSNV).

The protein resides in the cytoplasm. It localises to the cytoskeleton. Its function is as follows. May function as a scaffold on which the coordinated assembly of proteins can occur. May play a role as an adapter that, via its PDZ domain, localizes LIM-binding proteins to actin filaments of both skeletal muscle and nonmuscle tissues. The polypeptide is PDZ and LIM domain protein 7 (pdlim7) (Xenopus laevis (African clawed frog)).